The chain runs to 222 residues: Eukaryotic translation initiation factor 4E-1 (222 aa).

Residues 1–22 (MVDEVEKPASLEESKTNTREVE) are compositionally biased toward basic and acidic residues. The disordered stretch occupies residues 1–37 (MVDEVEKPASLEESKTNTREVEEGAEEVIESDDTMSS). Acidic residues predominate over residues 23-33 (EGAEEVIESDD). 2 EIF4G-binding regions span residues 47–50 (HPLE) and 57–93 (FDNPSGKSKQAAWGSSIRPIYTFSTVEDFWSVYNNIH). Residues 65–70 (KQAAWG), Lys-97, and 115–116 (WE) contribute to the mRNA site. The cysteines at positions 120 and 158 are disulfide-linked. Positions 141 to 150 (YTLLAMIGEQ) are EIF4G-binding. Residues 165 to 170 (RVRQEK) and 210 to 214 (KKLDR) contribute to the mRNA site.

It belongs to the eukaryotic initiation factor 4E family. EIF4F is a multi-subunit complex, the composition of which varies with external and internal environmental conditions. It is composed of at least EIF4A, EIF4E and EIF4G. EIF4E is also known to interact with other partners. In higher plants two isoforms of EIF4F have been identified, named isoform EIF4F and isoform EIF(iso)4F. Isoform EIF4F has subunits p220 and p26, whereas isoform EIF(iso)4F has subunits p82 and p28. According to the redox status, the Cys-120-Cys-158 disulfide bridge may have a role in regulating protein function by affecting its ability to bind capped mRNA. As to expression, expressed ubiquitously in seedlings, roots, leaves, sepals, petals, anthers and dehisced pollen, with highest levels in pollen, maturing anthers and roots. Strongly expressed in susceptible plants but not in resistant ones.

The protein resides in the nucleus. Its subcellular location is the cytoplasm. Functionally, component of the protein complex eIF4F, which is involved in the recognition of the mRNA cap, ATP-dependent unwinding of 5'-terminal secondary structure and recruitment of mRNA to the ribosome. Recognizes and binds the 7-methylguanosine-containing mRNA cap during an early step in the initiation of protein synthesis and facilitates ribosome binding by inducing the unwinding of the mRNAs secondary structures. Key component of recessive resistance to potyviruses. Its function is as follows. (Microbial infection) Susceptibility host factor required for viral infection (e.g. potato virus Y (PVY) and pepper mottle virus (PepMoV)) by recruiting viral RNAs to the host ribosomal complex via an interaction with viral genome-linked protein (VPg). In Nicotiana tabacum (Common tobacco), this protein is Eukaryotic translation initiation factor 4E-1.